Here is a 349-residue protein sequence, read N- to C-terminus: Alanine racemase (349 aa).

The active-site Proton acceptor; specific for D-alanine is the lysine 35. The residue at position 35 (lysine 35) is an N6-(pyridoxal phosphate)lysine. Residue arginine 130 participates in substrate binding. The active-site Proton acceptor; specific for L-alanine is tyrosine 244. Methionine 292 is a binding site for substrate.

The protein belongs to the alanine racemase family. The cofactor is pyridoxal 5'-phosphate.

It carries out the reaction L-alanine = D-alanine. The protein operates within amino-acid biosynthesis; D-alanine biosynthesis; D-alanine from L-alanine: step 1/1. Functionally, catalyzes the interconversion of L-alanine and D-alanine. May also act on other amino acids. The polypeptide is Alanine racemase (alr) (Dinoroseobacter shibae (strain DSM 16493 / NCIMB 14021 / DFL 12)).